The following is a 404-amino-acid chain: uncharacterized protein (404 aa).

This is an uncharacterized protein from Alcelaphine herpesvirus 1 (strain C500) (AlHV-1).